A 556-amino-acid polypeptide reads, in one-letter code: Endoplasmic reticulum membrane protein 65 (556 aa).

Topologically, residues 1-87 (MQHKDTAVAK…IRIPMFLEKF (87 aa)) are cytoplasmic. Ser-22 is subject to Phosphoserine. Residues 88–108 (MLFALLTSLDCFLYYFTVLPI) form a helical membrane-spanning segment. The Lumenal portion of the chain corresponds to 109–151 (RLIKGYVKQFKSYRQHYRLQQRSGHKNKIPFRYRITSREYKER). The helical transmembrane segment at 152 to 172 (CMIFIIVISSILLSKLDTSKL) threads the bilayer. The Cytoplasmic segment spans residues 173 to 224 (YHRIKRQSTMKLYMLFSVLEMADKMLASLGQSLLTVMLSRKNSERILLHKCL). A helical transmembrane segment spans residues 225–245 (LVSMSLTYVTIHGYVLVYQAI). Residues 246–330 (SLNIAVNSYS…INFWSPRSTL (85 aa)) are Lumenal-facing. The N-linked (GlcNAc...) asparagine glycan is linked to Asn-318. The helical transmembrane segment at 331-351 (SIVINILCGPMVSVVGSEVLV) threads the bilayer. At 352 to 391 (DWAKHAYITKFNRIRPQIYDKFYYIIYKDYSTRTHKLEDR) the chain is on the cytoplasmic side. Residues 392 to 412 (LGLPLPAFVVLFIVMVRPTLF) form a helical membrane-spanning segment. Residues 413 to 428 (KSSEPSYLPSLFRILF) lie on the Lumenal side of the membrane. The chain crosses the membrane as a helical span at residues 429–449 (MGASVFLLALLAKFTLDLILI). Over 450-556 (KWSKRIEQRF…RYKMVSKRIW (107 aa)) the chain is Cytoplasmic.

Belongs to the TAPT1 family. Interacts with SLP1.

Its subcellular location is the endoplasmic reticulum membrane. The protein resides in the mitochondrion. Functionally, may be involved in membrane protein folding. This chain is Endoplasmic reticulum membrane protein 65, found in Saccharomyces cerevisiae (strain ATCC 204508 / S288c) (Baker's yeast).